Consider the following 757-residue polypeptide: Cellulose synthase-like protein B5 (757 aa).

The next 2 helical transmembrane spans lie at 24–44 and 50–70; these read AVDL…ILHI and VWLL…IFTC. Residues aspartate 136 and aspartate 460 contribute to the active site. A run of 6 helical transmembrane segments spans residues 531 to 551, 572 to 592, 613 to 633, 671 to 691, 704 to 724, and 735 to 755; these read LAYF…YCLL, IVTL…SLGF, LFSI…GFVI, LFIP…GYLV, GSGL…LPFL, and IPLS…FFCV.

This sequence belongs to the glycosyltransferase 2 family. Plant cellulose synthase-like B subfamily. As to expression, expressed in young seedlings, primarily in the vascular tissue. Expressed in the root cap.

It localises to the golgi apparatus membrane. Its function is as follows. Thought to be a Golgi-localized beta-glycan synthase that polymerize the backbones of noncellulosic polysaccharides (hemicelluloses) of plant cell wall. The polypeptide is Cellulose synthase-like protein B5 (CSLB5) (Arabidopsis thaliana (Mouse-ear cress)).